The chain runs to 389 residues: Choline/ethanolaminephosphotransferase 2 (389 aa).

The next 8 membrane-spanning stretches (helical) occupy residues 49-69 (MITL…YIYS), 141-161 (TFWF…EHYF), 176-196 (GLAL…EWWA), 220-240 (IILF…NTSN), 252-272 (MLLA…VLIW), 286-306 (HLVV…MILA), 321-338 (MSLL…TARL), and 350-370 (VLLG…TSVI).

Belongs to the CDP-alcohol phosphatidyltransferase class-I family. Mg(2+) is required as a cofactor. Mn(2+) serves as cofactor.

Its subcellular location is the membrane. The enzyme catalyses CDP-ethanolamine + a 1,2-diacyl-sn-glycerol = a 1,2-diacyl-sn-glycero-3-phosphoethanolamine + CMP + H(+). It catalyses the reaction CDP-choline + a 1,2-diacyl-sn-glycerol = a 1,2-diacyl-sn-glycero-3-phosphocholine + CMP + H(+). It participates in phospholipid metabolism; phosphatidylethanolamine biosynthesis; phosphatidylethanolamine from ethanolamine: step 3/3. Its pathway is phospholipid metabolism; phosphatidylcholine biosynthesis; phosphatidylcholine from phosphocholine: step 2/2. Functionally, catalyzes both phosphatidylcholine and phosphatidylethanolamine biosynthesis from CDP-choline and CDP-ethanolamine, respectively. Has a higher cholinephosphotransferase activity than ethanolaminephosphotransferase activity. This chain is Choline/ethanolaminephosphotransferase 2 (AAPT2), found in Arabidopsis thaliana (Mouse-ear cress).